We begin with the raw amino-acid sequence, 232 residues long: Megakaryocyte and platelet inhibitory receptor G6b (232 aa).

A signal peptide spans 1–17 (MALVLQLLPLLLSKVQG). The Extracellular portion of the chain corresponds to 18–140 (NPEVSLEGNP…GSTHGSEYSK (123 aa)). 2 N-linked (GlcNAc...) asparagine glycosylation sites follow: Asn32 and Asn112. A helical membrane pass occupies residues 141 to 161 (VLIPLLGFGLVLGLGALGLVW). Over 162 to 232 (WRRSCVPPSH…DASTVYAVVV (71 aa)) the chain is Cytoplasmic. 2 consecutive short sequence motifs (ITIM motif) follow at residues 200–205 (LHYADL) and 226–231 (TVYAVV). At Tyr202 the chain carries Phosphotyrosine.

In terms of assembly, interacts (via ITIM motif) with PTPN6 and PTPN11. Binds to heparin. Post-translationally, N-glycosylated. May be O-glycosylated. In terms of processing, phosphorylated.

The protein localises to the cell membrane. Functionally, inhibitory receptor that acts as a critical regulator of hematopoietic lineage differentiation, megakaryocyte function and platelet production. Inhibits platelet aggregation and activation by agonists such as ADP and collagen-related peptide. This regulation of megakaryocate function as well as platelet production ann activation is done through the inhibition (via the 2 ITIM motifs) of the receptors CLEC1B and GP6:FcRgamma signaling. Appears to operate in a calcium-independent manner. This Rattus norvegicus (Rat) protein is Megakaryocyte and platelet inhibitory receptor G6b.